A 126-amino-acid polypeptide reads, in one-letter code: Urease subunit beta (126 aa).

This sequence belongs to the urease beta subunit family. In terms of assembly, heterotrimer of UreA (gamma), UreB (beta) and UreC (alpha) subunits. Three heterotrimers associate to form the active enzyme.

It localises to the cytoplasm. The catalysed reaction is urea + 2 H2O + H(+) = hydrogencarbonate + 2 NH4(+). The protein operates within nitrogen metabolism; urea degradation; CO(2) and NH(3) from urea (urease route): step 1/1. The sequence is that of Urease subunit beta from Frankia casuarinae (strain DSM 45818 / CECT 9043 / HFP020203 / CcI3).